The following is a 715-amino-acid chain: Transcription factor MST12 (715 aa).

Over residues 214–224 (SSSFNAQQVSF) the composition is skewed to low complexity. 3 disordered regions span residues 214 to 243 (SSSF…MPPP), 439 to 469 (AAHR…NSPP), and 518 to 539 (PMPS…AQGG). C2H2-type zinc fingers lie at residues 564 to 588 (HSCP…VRTH) and 594 to 616 (YICP…KRTH). The tract at residues 632–691 (EEEYSGDDHLGSLEEASPTSEGGYVTSSLNSAMAHSNTSQHPGSNAVSPNPGPMSHAPTY) is disordered. The span at 648-679 (SPTSEGGYVTSSLNSAMAHSNTSQHPGSNAVS) shows a compositional bias: polar residues.

It belongs to the STE12 transcription factor family.

It localises to the nucleus. In terms of biological role, transcription factor that may function downstream of PMK1 to regulate genes involved in infectious hyphae growth. Is not essential for vegetative growth, conidiation or appressorium formation. May be involved in the regulation of the expression of the cell surface sensor MSB2. The sequence is that of Transcription factor MST12 from Pyricularia oryzae (strain 70-15 / ATCC MYA-4617 / FGSC 8958) (Rice blast fungus).